A 421-amino-acid chain; its full sequence is 5-hydroxytryptamine receptor 1A (421 aa).

At 1–38 (MDMFSLGQGNNTTTSLEPFGTGGNDTGLSNVTFSYQVI) the chain is on the extracellular side. N-linked (GlcNAc...) asparagine glycosylation is found at Asn10, Asn11, Asn24, and Asn30. The chain crosses the membrane as a helical span at residues 39–59 (TSLLLGTLIFCAVLGNACVVA). Residues 60-73 (AIALERSLQNVANY) are Cytoplasmic-facing. The helical transmembrane segment at 74–98 (LIGSLAVTDLMVSVLVLPMAALYQV) threads the bilayer. Residues 99 to 107 (LNKWTLGQV) are Extracellular-facing. The helical transmembrane segment at 108–132 (TCDLFIALDVLCCTSSILHLCAIAL) threads the bilayer. Residues Cys109 and Cys187 are joined by a disulfide bond. Asp116 and Cys120 together coordinate serotonin. The DRY motif; important for ligand-induced conformation changes signature appears at 133-135 (DRY). The Cytoplasmic portion of the chain corresponds to 133–152 (DRYWAITDPIDYVNKRTPRR). Residues 153 to 174 (AAALISLTWLIGFLISIPPMLG) traverse the membrane as a helical segment. Topologically, residues 175–193 (WRTPEDRSNPNECTISKDH) are extracellular. Residues 194–216 (GYTIYSTFGAFYIPLLLMLVLYG) traverse the membrane as a helical segment. Residues 217–346 (RIFRAARFRI…LARERKTVKT (130 aa)) are Cytoplasmic-facing. The disordered stretch occupies residues 237-268 (GAGTSFGTSSAPPPKKSLNGQPGSGDCRRSAE). Positions 314, 345, 346, and 352 each coordinate 1D-myo-inositol 4-phosphate. A helical membrane pass occupies residues 347–370 (LGIIMGTFILCWLPFFIVALVLPF). At 371-378 (CESSCHMP) the chain is on the extracellular side. Residues 379-403 (ELLGAIINWLGYSNSLLNPVIYAYF) form a helical membrane-spanning segment. Residues 396–400 (NPVIY) carry the NPxxY motif; important for ligand-induced conformation changes and signaling motif. Residues Phe403, Asn404, and Lys405 each contribute to the 1D-myo-inositol 4-phosphate site. Residues 404 to 421 (NKDFQNAFKKIIKCKFCR) lie on the Cytoplasmic side of the membrane.

The protein belongs to the G-protein coupled receptor 1 family. 5-hydroxytryptamine receptor subfamily. HTR1A sub-subfamily. In terms of assembly, heterodimer; heterodimerizes with GPER1. Interacts with YIF1B. Interacts with GPR39 and GALR1. As to expression, most abundantly expressed in midbrain, in dorsal raphe and hippocampus. Detected at lower levels in amygdala and brain cortex.

The protein resides in the cell membrane. It localises to the cell projection. It is found in the dendrite. G-protein coupled receptor activity is regulated by lipids: phosphatidylinositol 4-phosphate increases HTR1A-mediated activity. Plays a role in the regulation of dopamine and 5-hydroxytryptamine levels in the brain, and thereby affects neural activity, mood and behavior. Plays a role in the response to anxiogenic stimuli. In terms of biological role, G-protein coupled receptor for 5-hydroxytryptamine (serotonin). Also functions as a receptor for various drugs and psychoactive substances. Ligand binding causes a conformation change that triggers signaling via guanine nucleotide-binding proteins (G proteins) and modulates the activity of downstream effectors, such as adenylate cyclase. HTR1A is coupled to G(i)/G(o) G alpha proteins and mediates inhibitory neurotransmission: signaling inhibits adenylate cyclase activity and activates a phosphatidylinositol-calcium second messenger system that regulates the release of Ca(2+) ions from intracellular stores. Beta-arrestin family members regulate signaling by mediating both receptor desensitization and resensitization processes. The polypeptide is 5-hydroxytryptamine receptor 1A (Htr1a) (Mus musculus (Mouse)).